Reading from the N-terminus, the 559-residue chain is Probable D-2-hydroxyglutarate dehydrogenase, mitochondrial (559 aa).

A mitochondrion-targeting transit peptide spans 1–80 (MARRAAAGLL…MNFEVQKRSF (80 aa)). One can recognise an FAD-binding PCMH-type domain in the interval 131 to 310 (YKGSSQLLLL…TKIAILTPAK (180 aa)).

It belongs to the FAD-binding oxidoreductase/transferase type 4 family. Homodimer. It depends on FAD as a cofactor.

It is found in the mitochondrion. The enzyme catalyses (R)-2-hydroxyglutarate + A = 2-oxoglutarate + AH2. Functionally, catalyzes the oxidation of D-2-hydroxyglutarate to alpha-ketoglutarate. The chain is Probable D-2-hydroxyglutarate dehydrogenase, mitochondrial (D2HGDH) from Oryza sativa subsp. japonica (Rice).